The chain runs to 312 residues: Urease accessory protein 7 (312 aa).

The segment at 28–86 (QEATGTDSHHAHHHHTPSGASSAISHTHDNMPHDHGQFHDHGPGLWTPEEHGHTHEHLE) is disordered. The tract at residues 36 to 87 (HHAHHHHTPSGASSAISHTHDNMPHDHGQFHDHGPGLWTPEEHGHTHEHLEH) is histine rich nickel-binding domain. The segment covering 53 to 86 (HTHDNMPHDHGQFHDHGPGLWTPEEHGHTHEHLE) has biased composition (basic and acidic residues). Positions 115–122 (GPVGSGKT) match the GTP binding P-loop motif. The short motif at 147 to 154 (TREDQEFL) is the Switch domain 1 element. The short motif at 171–172 (GG) is the switch domain 2 element.

Belongs to the SIMIBI class G3E GTPase family. UreG subfamily. URE4, URE6 and URE7 may form a complex that acts as a GTP-hydrolysis-dependent molecular chaperone, activating the urease apoprotein URE1.

Its function is as follows. Urease accessory protein that binds 2 nickel atoms likely via its conserved histidine-rich domain and supplies nickel for the functional urease URE1. Has probably a dual function as a nickel chaperone and GTPase. Plays a role in host brain invasion. This Cryptococcus neoformans var. grubii serotype A (strain H99 / ATCC 208821 / CBS 10515 / FGSC 9487) (Filobasidiella neoformans var. grubii) protein is Urease accessory protein 7.